The primary structure comprises 359 residues: S-adenosylmethionine:tRNA ribosyltransferase-isomerase (359 aa).

The protein belongs to the QueA family. Monomer.

The protein localises to the cytoplasm. It catalyses the reaction 7-aminomethyl-7-carbaguanosine(34) in tRNA + S-adenosyl-L-methionine = epoxyqueuosine(34) in tRNA + adenine + L-methionine + 2 H(+). It participates in tRNA modification; tRNA-queuosine biosynthesis. Functionally, transfers and isomerizes the ribose moiety from AdoMet to the 7-aminomethyl group of 7-deazaguanine (preQ1-tRNA) to give epoxyqueuosine (oQ-tRNA). The polypeptide is S-adenosylmethionine:tRNA ribosyltransferase-isomerase (Colwellia psychrerythraea (strain 34H / ATCC BAA-681) (Vibrio psychroerythus)).